Reading from the N-terminus, the 152-residue chain is Methylglyoxal synthase (152 aa).

The 147-residue stretch at 6-152 (RTMATAKNIA…YQHYLNGRLK (147 aa)) folds into the MGS-like domain. Substrate-binding positions include histidine 19, lysine 23, 45-48 (TGTT), and 65-66 (SG). Aspartate 71 acts as the Proton donor/acceptor in catalysis. Histidine 98 serves as a coordination point for substrate.

Belongs to the methylglyoxal synthase family.

It catalyses the reaction dihydroxyacetone phosphate = methylglyoxal + phosphate. In terms of biological role, catalyzes the formation of methylglyoxal from dihydroxyacetone phosphate. This Photorhabdus laumondii subsp. laumondii (strain DSM 15139 / CIP 105565 / TT01) (Photorhabdus luminescens subsp. laumondii) protein is Methylglyoxal synthase.